Consider the following 1322-residue polypeptide: Phosphoribosylformylglycinamidine synthase (1322 aa).

Gly300 to Asp311 contacts ATP. Positions Gln593–Pro608 are enriched in polar residues. Residues Gln593–Pro613 are disordered. Residue Ala702 coordinates ATP. Mg(2+) contacts are provided by Asp703, Glu742, Asn746, and Asp915. Ser917 contacts ATP. The 250-residue stretch at Val1073–Gly1322 folds into the Glutamine amidotransferase type-1 domain. The active-site Nucleophile is Cys1166. Catalysis depends on residues His1287 and Glu1289.

This sequence in the N-terminal section; belongs to the FGAMS family. Monomer.

Its subcellular location is the cytoplasm. It catalyses the reaction N(2)-formyl-N(1)-(5-phospho-beta-D-ribosyl)glycinamide + L-glutamine + ATP + H2O = 2-formamido-N(1)-(5-O-phospho-beta-D-ribosyl)acetamidine + L-glutamate + ADP + phosphate + H(+). The protein operates within purine metabolism; IMP biosynthesis via de novo pathway; 5-amino-1-(5-phospho-D-ribosyl)imidazole from N(2)-formyl-N(1)-(5-phospho-D-ribosyl)glycinamide: step 1/2. Functionally, phosphoribosylformylglycinamidine synthase involved in the purines biosynthetic pathway. Catalyzes the ATP-dependent conversion of formylglycinamide ribonucleotide (FGAR) and glutamine to yield formylglycinamidine ribonucleotide (FGAM) and glutamate. In Xylella fastidiosa (strain 9a5c), this protein is Phosphoribosylformylglycinamidine synthase.